Consider the following 335-residue polypeptide: MSPSATDTTEGVDPTILTLRKVLTSESEPLARRFRALFSLKHLACLQPPTEKTLPAIQAIAAAFTSPSALLKHELAYCLGQTRNPESVPFLQQVAKDTEQDTMCRHEAAEALGALGYEDSLEILKALRDNQNESDVIRETCDIAVDRILWENSEARKAEKLKTSDFTSIDPAPPLPMTASEPSIPEIEKTLLDTSLPLFLRYRAMFALRDLASPPDLPTATRAVEALAKGLKDPSALFRHEIAFVFGQLCHPASIPSLTEALSNQSEAGMVRHEAAEALGSLGDCEGVEETLRKFLNDPEQVVRDSVIVALDMAEYEKNGEVEYALVPDAGVAAA.

HEAT-like PBS-type repeat units lie at residues 71-97 (LKHE…VAKD), 104-130 (CRHE…LRDN), 200-233 (LRYR…GLKD), 238-264 (FRHE…ALSN), and 271-298 (VRHE…FLND). Fe cation contacts are provided by histidine 73, glutamate 74, histidine 106, and glutamate 107. Residues histidine 240, glutamate 241, histidine 273, and glutamate 274 each coordinate Fe cation.

Belongs to the deoxyhypusine hydroxylase family. Requires Fe(2+) as cofactor.

The protein resides in the cytoplasm. It is found in the nucleus. It carries out the reaction [eIF5A protein]-deoxyhypusine + AH2 + O2 = [eIF5A protein]-hypusine + A + H2O. The protein operates within protein modification; eIF5A hypusination. Functionally, catalyzes the hydroxylation of the N(6)-(4-aminobutyl)-L-lysine intermediate to form hypusine, an essential post-translational modification only found in mature eIF-5A factor. This is Deoxyhypusine hydroxylase (lia1) from Neosartorya fischeri (strain ATCC 1020 / DSM 3700 / CBS 544.65 / FGSC A1164 / JCM 1740 / NRRL 181 / WB 181) (Aspergillus fischerianus).